Consider the following 1886-residue polypeptide: Nuclear pore membrane glycoprotein 210 (1886 aa).

The signal sequence occupies residues M1–A25. The Perinuclear space segment spans residues A26–D1805. N-linked (GlcNAc...) asparagine glycosylation is found at N337, N484, N681, and N1039. The BIG2 domain maps to F1078–K1151. Residues S1806–Y1828 traverse the membrane as a helical segment. The Cytoplasmic segment spans residues H1829–H1886. Position 1839 is a phosphoserine (S1839). At T1844 the chain carries Phosphothreonine. Residues L1866–H1886 form a disordered region. A phosphoserine mark is found at S1873, S1876, S1880, and S1885.

It belongs to the NUP210 family. As to quaternary structure, forms dimers and possibly higher-order oligomers. N-glycosylated, but not all potential glycosylation sites may be used. Contains high-mannose type oligosaccharides. Post-translationally, phosphorylated at Ser-1880 in mitosis specifically; not phosphorylated in interphase.

It is found in the nucleus. It localises to the nuclear pore complex. The protein localises to the nucleus membrane. Its subcellular location is the endoplasmic reticulum membrane. Nucleoporin essential for nuclear pore assembly and fusion, nuclear pore spacing, as well as structural integrity. The protein is Nuclear pore membrane glycoprotein 210 (Nup210) of Rattus norvegicus (Rat).